Reading from the N-terminus, the 691-residue chain is Elongation factor G (691 aa).

A tr-type G domain is found at 12-286 (KKLRNIGIMA…GILEYLPSPL (275 aa)). GTP is bound by residues 21-28 (AHIDAGKT), 85-89 (DTPGH), and 139-142 (NKMD).

This sequence belongs to the TRAFAC class translation factor GTPase superfamily. Classic translation factor GTPase family. EF-G/EF-2 subfamily.

It localises to the cytoplasm. Catalyzes the GTP-dependent ribosomal translocation step during translation elongation. During this step, the ribosome changes from the pre-translocational (PRE) to the post-translocational (POST) state as the newly formed A-site-bound peptidyl-tRNA and P-site-bound deacylated tRNA move to the P and E sites, respectively. Catalyzes the coordinated movement of the two tRNA molecules, the mRNA and conformational changes in the ribosome. The protein is Elongation factor G of Thermosipho africanus (strain TCF52B).